Consider the following 81-residue polypeptide: MATKKNNFEEQLNELQEIVNKLESGNVPLEDALNEFQAGVKLSRELEKKLNDAEQTVAKLVDKDGNEKTLDPQNASAPEEE.

The tract at residues 59-81 (KLVDKDGNEKTLDPQNASAPEEE) is disordered. A compositionally biased stretch (basic and acidic residues) spans 60-70 (LVDKDGNEKTL). Residues 71–81 (DPQNASAPEEE) are compositionally biased toward polar residues.

Belongs to the XseB family. Heterooligomer composed of large and small subunits.

It localises to the cytoplasm. The enzyme catalyses Exonucleolytic cleavage in either 5'- to 3'- or 3'- to 5'-direction to yield nucleoside 5'-phosphates.. Bidirectionally degrades single-stranded DNA into large acid-insoluble oligonucleotides, which are then degraded further into small acid-soluble oligonucleotides. This Lactobacillus gasseri (strain ATCC 33323 / DSM 20243 / BCRC 14619 / CIP 102991 / JCM 1131 / KCTC 3163 / NCIMB 11718 / NCTC 13722 / AM63) protein is Exodeoxyribonuclease 7 small subunit.